Here is a 270-residue protein sequence, read N- to C-terminus: Glutamate racemase (270 aa).

Residues Asp-14 to Ser-15 and Tyr-46 to Gly-47 each bind substrate. Cys-77 serves as the catalytic Proton donor/acceptor. Asn-78–Thr-79 provides a ligand contact to substrate. The Proton donor/acceptor role is filled by Cys-189. Substrate is bound at residue Thr-190 to His-191.

The protein belongs to the aspartate/glutamate racemases family.

It carries out the reaction L-glutamate = D-glutamate. The protein operates within cell wall biogenesis; peptidoglycan biosynthesis. Functionally, provides the (R)-glutamate required for cell wall biosynthesis. The sequence is that of Glutamate racemase from Neisseria gonorrhoeae (strain ATCC 700825 / FA 1090).